Reading from the N-terminus, the 874-residue chain is Probable cation-transporting P-type ATPase (874 aa).

Residues 1–41 (MNSWTGLSEQAAIKSRQEHGANFLPEKKATPFWLLFLQQFK) lie on the Cytoplasmic side of the membrane. The helical transmembrane segment at 42-62 (SLVVILLLLASLLSFVVAIVS) threads the bilayer. Residues 63 to 79 (GLRSNWNFNHDLIIEWV) are Extracellular-facing. The chain crosses the membrane as a helical span at residues 80 to 100 (QPFIILLTVFANSLIGSIQEF). At 101 to 237 (KAQKSASALK…TKLSPLQQKL (137 aa)) the chain is on the cytoplasmic side. Residues 238–257 (EKIGKWFSWFGLGLFAVVFL) form a helical membrane-spanning segment. Residues 258-275 (VQTALLGFDNFTNNWSIA) are Extracellular-facing. A helical membrane pass occupies residues 276–293 (LIGAIALVVAIIPEGLVT). Residues 294-644 (FINVIFALSV…EEGRKTFLTC (351 aa)) are Cytoplasmic-facing. D331 acts as the 4-aspartylphosphate intermediate in catalysis. Positions 589 and 593 each coordinate Mg(2+). A helical transmembrane segment spans residues 645-664 (KRVLLNLFLTSIAGTVVVLL). Topologically, residues 665 to 687 (GLFILGQVFKTNLLQQGHDFQVF) are extracellular. A helical transmembrane segment spans residues 688–708 (SPTQLLIINLFVHGFPAVALA). The Cytoplasmic portion of the chain corresponds to 709–726 (VQPVKEKLMVGSFSTKNL). The chain crosses the membrane as a helical span at residues 727–749 (FYNRQGFDLIWQSLFLSFLTLLF). Residues 750-770 (YSLGIIYAINNRDLQTSGDLI) lie on the Extracellular side of the membrane. A helical membrane pass occupies residues 771–790 (NRAGSTCGFFILGASAALNS). Topologically, residues 791–803 (LNLMVDKPLLMTN) are cytoplasmic. A helical membrane pass occupies residues 804 to 826 (PWFFKLVWIGSLASILVFLLIIF). Topologically, residues 827–844 (INPLGLVFNVLQDLTNHP) are extracellular. A helical membrane pass occupies residues 845-865 (VLISYSFGGVILYMGMNEVVK). Topologically, residues 866 to 874 (LIRLGYGNI) are cytoplasmic.

The protein belongs to the cation transport ATPase (P-type) (TC 3.A.3) family. Type II subfamily.

It localises to the cell membrane. The enzyme catalyses ATP + H2O = ADP + phosphate + H(+). Could mediate calcium influx. In Mycoplasma genitalium (strain ATCC 33530 / DSM 19775 / NCTC 10195 / G37) (Mycoplasmoides genitalium), this protein is Probable cation-transporting P-type ATPase (pacL).